The following is a 394-amino-acid chain: Probable fatty acyl-CoA transferase Rv3272 (394 aa).

Asp-175 (nucleophile) is an active-site residue.

This sequence belongs to the CoA-transferase III family. In terms of assembly, homodimer.

Probably involved in fatty acid metabolism. Binds to fatty acyl-CoAs of varying carbon chain lengths, with the highest binding affinity for palmitoyl-CoA (C16:0). In vitro, alters the cell wall lipid profile and protects mycobacteria from acidic, oxidative and antibiotic stress. May play a significant role in host-pathogen interaction. The polypeptide is Probable fatty acyl-CoA transferase Rv3272 (Mycobacterium tuberculosis (strain ATCC 25618 / H37Rv)).